The sequence spans 196 residues: Imidazoleglycerol-phosphate dehydratase (196 aa).

This sequence belongs to the imidazoleglycerol-phosphate dehydratase family.

It localises to the cytoplasm. The enzyme catalyses D-erythro-1-(imidazol-4-yl)glycerol 3-phosphate = 3-(imidazol-4-yl)-2-oxopropyl phosphate + H2O. It participates in amino-acid biosynthesis; L-histidine biosynthesis; L-histidine from 5-phospho-alpha-D-ribose 1-diphosphate: step 6/9. This is Imidazoleglycerol-phosphate dehydratase from Caulobacter sp. (strain K31).